Here is a 489-residue protein sequence, read N- to C-terminus: Rhamnulokinase (489 aa).

An ATP-binding site is contributed by 13–17 (ASSGR). A disulfide bridge links cysteine 68 with cysteine 222. Residues glycine 83 and 236–238 (HDT) each bind substrate. The active-site Proton acceptor is aspartate 237. Residue threonine 259 participates in ATP binding. Asparagine 296 is a substrate binding site. Glutamine 304 provides a ligand contact to ATP. Cysteine 353 and cysteine 370 are disulfide-bonded. Position 402 (glycine 402) interacts with ATP. Cysteine 413 and cysteine 417 are disulfide-bonded.

Belongs to the rhamnulokinase family. Mg(2+) serves as cofactor.

The catalysed reaction is L-rhamnulose + ATP = L-rhamnulose 1-phosphate + ADP + H(+). It participates in carbohydrate degradation; L-rhamnose degradation; glycerone phosphate from L-rhamnose: step 2/3. Involved in the catabolism of L-rhamnose (6-deoxy-L-mannose). Catalyzes the transfer of the gamma-phosphate group from ATP to the 1-hydroxyl group of L-rhamnulose to yield L-rhamnulose 1-phosphate. This chain is Rhamnulokinase, found in Salmonella heidelberg (strain SL476).